We begin with the raw amino-acid sequence, 314 residues long: DNA-directed RNA polymerase subunit alpha (314 aa).

An alpha N-terminal domain (alpha-NTD) region spans residues Met-1–Asn-228. The segment at Pro-243–Ala-314 is alpha C-terminal domain (alpha-CTD).

It belongs to the RNA polymerase alpha chain family. As to quaternary structure, homodimer. In cyanobacteria the RNAP catalytic core is composed of 2 alpha, 1 beta, 1 beta', 1 gamma and 1 omega subunit. When a sigma factor is associated with the core the holoenzyme is formed, which can initiate transcription.

It carries out the reaction RNA(n) + a ribonucleoside 5'-triphosphate = RNA(n+1) + diphosphate. Functionally, DNA-dependent RNA polymerase catalyzes the transcription of DNA into RNA using the four ribonucleoside triphosphates as substrates. The protein is DNA-directed RNA polymerase subunit alpha of Synechocystis sp. (strain ATCC 27184 / PCC 6803 / Kazusa).